Consider the following 515-residue polypeptide: 1-pyrroline-5-carboxylate dehydrogenase (515 aa).

Active-site residues include Glu-286 and Cys-320.

Belongs to the aldehyde dehydrogenase family. RocA subfamily.

The catalysed reaction is L-glutamate 5-semialdehyde + NAD(+) + H2O = L-glutamate + NADH + 2 H(+). The protein operates within amino-acid degradation; L-proline degradation into L-glutamate; L-glutamate from L-proline: step 2/2. This Bacillus mycoides (strain KBAB4) (Bacillus weihenstephanensis) protein is 1-pyrroline-5-carboxylate dehydrogenase.